The primary structure comprises 117 residues: Large ribosomal subunit protein bL20 (117 aa).

This sequence belongs to the bacterial ribosomal protein bL20 family.

Binds directly to 23S ribosomal RNA and is necessary for the in vitro assembly process of the 50S ribosomal subunit. It is not involved in the protein synthesizing functions of that subunit. This Photobacterium profundum (strain SS9) protein is Large ribosomal subunit protein bL20.